The sequence spans 210 residues: Protein GrpE (210 aa).

Positions 1–12 (MSDQAKDERAPS) are enriched in basic and acidic residues. Disordered stretches follow at residues 1 to 26 (MSDQAKDERAPSEAEAAEANAERTEG) and 191 to 210 (IAAEAPVEPGPVNEQAEKDA).

The protein belongs to the GrpE family. Homodimer.

It is found in the cytoplasm. Functionally, participates actively in the response to hyperosmotic and heat shock by preventing the aggregation of stress-denatured proteins, in association with DnaK and GrpE. It is the nucleotide exchange factor for DnaK and may function as a thermosensor. Unfolded proteins bind initially to DnaJ; upon interaction with the DnaJ-bound protein, DnaK hydrolyzes its bound ATP, resulting in the formation of a stable complex. GrpE releases ADP from DnaK; ATP binding to DnaK triggers the release of the substrate protein, thus completing the reaction cycle. Several rounds of ATP-dependent interactions between DnaJ, DnaK and GrpE are required for fully efficient folding. In Mesorhizobium japonicum (strain LMG 29417 / CECT 9101 / MAFF 303099) (Mesorhizobium loti (strain MAFF 303099)), this protein is Protein GrpE.